A 50-amino-acid polypeptide reads, in one-letter code: ELCEKASKTWSGNCGNTGHCDNQCKSWEGAAHGACHVRNGKHMCFCYFNC.

Disulfide bonds link Cys3–Cys50, Cys14–Cys35, Cys20–Cys44, and Cys24–Cys46.

Belongs to the DEFL family.

The protein localises to the secreted. Possesses antimicrobial activity sensitive to inorganic cations. Has no inhibitory effect on insect gut alpha-amylase. Induces potential changes in fungal membranes and increased K+ efflux and Ca(2+) uptake. Interacts with sphingolipids and ergosterols found in fungal plasma membranes. This chain is Defensin-like protein 1, found in Dahlia merckii (Bedding dahlia).